Consider the following 294-residue polypeptide: MTKLKKVMISVIAATLLLLAGCGSSAVIKTDAGSVTQDELYEAMKTTYGNEVVQQLTFKKILEDKYTVTEKEVNAEYKKYEEQYGDSFESTLSSNNLTKTSFKENLEYNLLVQKATEANMDVSESKLKAYYKTWEPDITVRHILVDDEATAKEIQTKLKNGEKFTDLAKEYSTDTATSTNGGLLDPFGPGEMDETFEKAAYALENKDDVSGIVKSTYGYHLIQLVKKTEKGTYAKEKANVKAAYIKSQLTSENMTAALKKELKAANIDIKDSDLKDAFADYTSTSSTSSTTTSN.

The signal sequence occupies residues 1-21 (MTKLKKVMISVIAATLLLLAG). Cys22 carries the N-palmitoyl cysteine lipid modification. The S-diacylglycerol cysteine moiety is linked to residue Cys22. The PpiC domain maps to 135–226 (EPDITVRHIL…YGYHLIQLVK (92 aa)).

This sequence belongs to the PrsA family.

The protein localises to the cell membrane. The catalysed reaction is [protein]-peptidylproline (omega=180) = [protein]-peptidylproline (omega=0). Its function is as follows. Plays a major role in protein secretion by helping the post-translocational extracellular folding of several secreted proteins. The chain is Foldase protein PrsA 1 (prsA1) from Listeria monocytogenes serovar 1/2a (strain ATCC BAA-679 / EGD-e).